Here is a 304-residue protein sequence, read N- to C-terminus: MDLIILVGIAIALLVVIISLYLLQKKNSTTEAKPAAAAPQRGVPQRAQEGVPRRAQIARNQRNRLRQNAPVAAAAPQAEAPAGSDNDDDAQADGEGARLPQGAVLDEKMGAKKRAKMEAKEAKRVQREQELYDREQRKAKEAKEDAERKQQEEIEAEAERKKAEAERLAKEERERKEHEEYLKMKAAFSVEEEGFEEGDADEQDNLLADFIQYIKDNKVVVLEDLAVAFKLKTQQAIDRIQELQADGTITGVIDDRGKFIYVSEEELVAVAKFIKQRGRVSIADLAESSNNLINLTPVSAEGSS.

The Lumenal segment spans residues 1-2 (MD). Residues 3 to 23 (LIILVGIAIALLVVIISLYLL) form a helical membrane-spanning segment. The Cytoplasmic portion of the chain corresponds to 24–304 (QKKNSTTEAK…LTPVSAEGSS (281 aa)). A disordered region spans residues 31 to 174 (EAKPAAAAPQ…AERLAKEERE (144 aa)). Residues 53 to 82 (RRAQIARNQRNRLRQNAPVAAAAPQAEAPA) show a composition bias toward low complexity. A compositionally biased stretch (basic and acidic residues) spans 105-174 (LDEKMGAKKR…AERLAKEERE (70 aa)).

Belongs to the DDRGK1 family. In terms of assembly, interacts with Atg9; the interaction is transient.

It localises to the endoplasmic reticulum membrane. In terms of biological role, substrate adapter for ufmylation, the covalent attachment of the ubiquitin-like modifier UFM1 to substrate proteins. Required for ufmylation of Atg9; protects the nervous system during aging, possibly by stabilizing Atg9 and supporting its function. The protein is DDRGK domain-containing protein 1 of Drosophila ananassae (Fruit fly).